The sequence spans 250 residues: MSKSTTVLITGANKGIGLGMAKAYLSRPNHIVICSVRSAKTDVTDLEAASKASGSKLLLVYIESTSKTDPAKAVEDVQAAGVDHLDVLIANAGGMPEGNKPLLELGPDELCWSVQVNAAAPLLVLQAFKPLLQKADAPRFAVISSTSGSIEHMKNIHSFIFPGYGAAKATLNWLTMGVHLSQEWLTTLVIHPGLVQSEPGNWVAKQIGMAEAPTTIEQAAEGVIKALTNATRESVGGKFLSTSDGTVLPW.

NADP(+) is bound by residues Ile-16, Ser-35, Glu-63, and Asn-91. Catalysis depends on proton donor residues Ser-145 and Tyr-164. The NADP(+) site is built by Tyr-164, Lys-168, Val-195, and Ser-197. Lys-168 serves as the catalytic Lowers pKa of active site Tyr.

Belongs to the short-chain dehydrogenases/reductases (SDR) family.

The protein operates within polyketide biosynthesis. Its function is as follows. Short-chain dehydrogenase; part of the gene cluster that mediates the biosynthesis of pyriculol and pyriculariol, two heptaketides that induce lesion formation upon application on rice leaves but are dispensable for pathogenicity. The highly reducing polyketide synthase synthesizes the heptaketide backbone of pyriculol and pyriculariol. Pyriculol and pyriculariol contain several hydroxyl moieties and double bonds, so it can be assumed that several reduction steps occur during biosynthesis. These reactions could be executed by PKS19 itself or partly by the tailoring enzymes OXR1, OXR2, RED1, RED2 or RED3, identified within the cluster. The FAD-linked oxidoreductase OXR1 is the only tailoring enzyme for which the function has been determined yet, and is involved in the oxidation of dihydropyriculol and dihydropyriculariol into pyriculol and pyriculariol, respectively. The sequence is that of Short-chain dehydrogenase RED3 from Pyricularia oryzae (strain 70-15 / ATCC MYA-4617 / FGSC 8958) (Rice blast fungus).